The following is a 275-amino-acid chain: Shikimate dehydrogenase (NADP(+)) (275 aa).

Shikimate-binding positions include 17–19 (SKS) and T64. K68 serves as the catalytic Proton acceptor. An NADP(+)-binding site is contributed by E80. Shikimate-binding residues include N89 and D105. NADP(+) is bound by residues 129-133 (GAGGA), 152-157 (NRTFFK), and M216. Residue Y218 participates in shikimate binding. Position 240 (G240) interacts with NADP(+).

This sequence belongs to the shikimate dehydrogenase family. As to quaternary structure, homodimer.

The catalysed reaction is shikimate + NADP(+) = 3-dehydroshikimate + NADPH + H(+). It participates in metabolic intermediate biosynthesis; chorismate biosynthesis; chorismate from D-erythrose 4-phosphate and phosphoenolpyruvate: step 4/7. Involved in the biosynthesis of the chorismate, which leads to the biosynthesis of aromatic amino acids. Catalyzes the reversible NADPH linked reduction of 3-dehydroshikimate (DHSA) to yield shikimate (SA). In Pectobacterium atrosepticum (strain SCRI 1043 / ATCC BAA-672) (Erwinia carotovora subsp. atroseptica), this protein is Shikimate dehydrogenase (NADP(+)).